The chain runs to 233 residues: MAKLTKRMRNIREKVDVVKQYEINEAVALLKELATAKFVESVDVAVNLGIDARKSDQNVRGATVLPHGTGRSVRVAVFAQGANAEAAKEAGAELVGMDDLAAKVKAGEMDFDVVIASPDAMRVVGQLGQILGPRGLMPNPKVGTVTPNVAEAVKNAKAGQVRYRNDKNGIIHTTIGKVDFNEAQLKENLEALLVALKKAKPSSAKGVYIKKVSLSTTMGAGVAIDQASLSATV.

This sequence belongs to the universal ribosomal protein uL1 family. As to quaternary structure, part of the 50S ribosomal subunit.

Its function is as follows. Binds directly to 23S rRNA. The L1 stalk is quite mobile in the ribosome, and is involved in E site tRNA release. In terms of biological role, protein L1 is also a translational repressor protein, it controls the translation of the L11 operon by binding to its mRNA. This chain is Large ribosomal subunit protein uL1, found in Proteus mirabilis (strain HI4320).